The following is a 143-amino-acid chain: Fluoride-specific ion channel FluC 1 (143 aa).

4 consecutive transmembrane segments (helical) span residues 13–33 (VLVG…SVIA), 42–62 (GVPW…ATLL), 80–100 (LCIG…TVEA), and 111–131 (WGIA…WVVI). Na(+) contacts are provided by Gly-88 and Thr-91.

The protein belongs to the fluoride channel Fluc/FEX (TC 1.A.43) family.

The protein resides in the cell membrane. It carries out the reaction fluoride(in) = fluoride(out). With respect to regulation, na(+) is not transported, but it plays an essential structural role and its presence is essential for fluoride channel function. Fluoride-specific ion channel. Important for reducing fluoride concentration in the cell, thus reducing its toxicity. The protein is Fluoride-specific ion channel FluC 1 of Cutibacterium acnes (strain DSM 16379 / KPA171202) (Propionibacterium acnes).